The sequence spans 938 residues: Translation initiation factor IF-2 (938 aa).

The interval K55 to E322 is disordered. Composition is skewed to low complexity over residues E57–K68 and K77–P117. Positions K118–P136 are enriched in pro residues. 3 stretches are compositionally biased toward low complexity: residues A141–A153, G180–N198, and M224–G233. Residues P247–G293 are compositionally biased toward gly residues. Over residues R310 to R319 the composition is skewed to basic residues. The tr-type G domain maps to A431 to D603. Residues G440–T447 are G1. GTP is bound at residue G440 to T447. A G2 region spans residues G465–H469. A G3 region spans residues D490 to G493. GTP is bound by residues D490 to H494 and N544 to D547. The G4 stretch occupies residues N544 to D547. A G5 region spans residues S580–K582.

The protein belongs to the TRAFAC class translation factor GTPase superfamily. Classic translation factor GTPase family. IF-2 subfamily.

The protein resides in the cytoplasm. In terms of biological role, one of the essential components for the initiation of protein synthesis. Protects formylmethionyl-tRNA from spontaneous hydrolysis and promotes its binding to the 30S ribosomal subunits. Also involved in the hydrolysis of GTP during the formation of the 70S ribosomal complex. This is Translation initiation factor IF-2 from Nocardioides sp. (strain ATCC BAA-499 / JS614).